Reading from the N-terminus, the 380-residue chain is Asporin (380 aa).

An N-terminal signal peptide occupies residues 1–14; that stretch reads MKEYVLLLFLALCS. A propeptide spanning residues 15 to 32 is cleaved from the precursor; it reads AKPFFSPSHIALKNMMLK. Positions 35 to 54 are enriched in acidic residues; sequence EDTDDDDDDDDDDDDDDEDN. The tract at residues 35–59 is disordered; sequence EDTDDDDDDDDDDDDDDEDNSLFPT. S55 is a glycosylation site (O-linked (GalNAc...) serine). The LRRNT domain maps to 66–102; sequence FFPFDLFPMCPFGCQCYSRVVHCSDLGLTSVPTNIPF. 2 cysteine pairs are disulfide-bonded: C75–C81 and C79–C88. 11 LRR repeats span residues 103 to 124, 127 to 148, 151 to 173, 174 to 193, 196 to 219, 242 to 263, 266 to 287, 290 to 312, 313 to 334, 335 to 357, and 358 to 380; these read DTRM…DFKG, SLYG…AFLT, KLRR…PKSL, AELR…TFKG, ALHV…AFEG, TLLE…DFKR, ELQR…SLAN, RVRE…PELK, YLQI…DFCP, TVPK…VKYW, and EMQP…NFGM. The tract at residues 166 to 212 is interaction with TGFB1; the sequence is PLNLPKSLAELRIHENKVKKIQKDTFKGMNALHVLEMSANPLDNNGI. An N-linked (GlcNAc...) asparagine glycan is attached at N282. A disulfide bond links C333 and C366.

It belongs to the small leucine-rich proteoglycan (SLRP) family. SLRP class I subfamily. As to quaternary structure, interacts with TGFB1, TGFB2 and TGFB3. DCN, BGN, and FMOD inhibit binding to TGFB1. Interacts with BMP2. Interacts in vitro with type II collagen. Interacts with type I collagen. DCN can inhibit collagen binding. There is no serine/glycine dipeptide sequence expected for the attachment of O-linked glycosaminoglycans and this is probably not a proteoglycan. The O-linked polysaccharide on 54-Ser is probably the mucin type linked to GalNAc. Post-translationally, the N-linked glycan at Asn-282 is composed of variable structures of GlcNAc, mannose, fucose, HexNAc and hexose. As to expression, higher levels in osteoarthritic articular cartilage, aorta, uterus. Moderate expression in small intestine, heart, liver, bladder, ovary, stomach, and in the adrenal, thyroid, and mammary glands. Low expression in trachea, bone marrow, and lung. Colocalizes with TGFB1 in chondrocytes within osteoarthritic (OA) lesions of articular cartilage.

It localises to the secreted. Its subcellular location is the extracellular space. It is found in the extracellular matrix. Functionally, negatively regulates periodontal ligament (PDL) differentiation and mineralization to ensure that the PDL is not ossified and to maintain homeostasis of the tooth-supporting system. Inhibits BMP2-induced cytodifferentiation of PDL cells by preventing its binding to BMPR1B/BMP type-1B receptor, resulting in inhibition of BMP-dependent activation of SMAD proteins. Critical regulator of TGF-beta in articular cartilage and plays an essential role in cartilage homeostasis and osteoarthritis (OA) pathogenesis. Negatively regulates chondrogenesis in the articular cartilage by blocking the TGF-beta/receptor interaction on the cell surface and inhibiting the canonical TGF-beta/Smad signal. Binds calcium and plays a role in osteoblast-driven collagen biomineralization activity. The sequence is that of Asporin (ASPN) from Homo sapiens (Human).